The following is a 267-amino-acid chain: 27 kDa primary mesenchyme-specific spicule protein (267 aa).

Positions 1–16 are cleaved as a signal peptide; the sequence is MKLLAILLVLPALCFG. The interval 20-64 is 11 X 4 AA tandem repeats of G-[PQ]-G-[MQ]; that stretch reads EGPGMGPGMGPGMGPGMGPGMGPGMGPGMGPGMGPGQGQGQGQGQ. A run of 11 repeats spans residues 21-24, 25-28, 29-32, 33-36, 37-40, 41-44, 45-48, 49-52, 53-56, 57-60, and 61-64. The tract at residues 44–68 is disordered; the sequence is MGPGMGPGMGPGQGQGQGQGQGQVG. One can recognise a C-type lectin domain in the interval 79 to 220; that stretch reads IGQQCFKMMS…CDEPMYFACS (142 aa). Cystine bridges form between Cys-100-Cys-219 and Cys-197-Cys-211.

As to expression, expressed specifically in the micromere/primary mesenchyme cells (PMC) lineage. Produced uniformly and exclusively by PMCs through the early prism stage and this specificity is further restricted during skeletogenesis to a subpopulation of PMCs associated with the growing tips of the spicules.

It localises to the secreted. In terms of biological role, may play a role in the regulation or execution of skeletal growth. The sequence is that of 27 kDa primary mesenchyme-specific spicule protein (PM27) from Strongylocentrotus purpuratus (Purple sea urchin).